A 277-amino-acid polypeptide reads, in one-letter code: Alpha-ketoglutarate-dependent dioxygenase tstK (277 aa).

This sequence belongs to the asaB hydroxylase/desaturase family.

It catalyses the reaction 2-[(1R,8S,14R,15R)-11-hydroxy-14,15-bis[(6E)-oct-6-en-1-yl]-3,5,9-trioxo-4,10-dioxatetracyclo[9.4.0.0(2,6).0(8,12)]pentadeca-2(6),12-dien-8-yl]acetate + 3 2-oxoglutarate + 3 O2 = phomoidride A + 3 succinate + 3 CO2 + H2O. Alpha-ketoglutarate-dependent dioxygenase; part of the gene cluster that mediates the biosynthesis of the antihypercholesterolemic agents phomoidrides which are dimeric anhydrides. Within the pathway, tstK is responsible for the iterative oxidation necessary to convert prephomoidride to phomoidride A. The pathway begins with the highly reducing polyketide synthase tstiA that catalyzes the formation of a C12-fatty acyl-ACP, starting from one acetate and 5 malonate units. The hydrolase tstM is involved in the release of the C12-fatty acyl chain from phiA. The alkylcitrate synthase (ACS) tstJ and the alkylcitrate dehydratase (ACDH) tstI then give rise to decarboxylated monomeric anhydrides by coupling the C12-fatty acyl chain with oxalacetic acid. The cyclase tstC is responsible for the dimerization of the monomeric anhydrides which leads to the production of prephomoidride that contains the characteristic bicyclo[4.3.1]deca-1,6-diene system of phomoidrides. Iterative oxidation catalyzed by the alpha-ketoglutarate-dependent dioxygenase tstK produced then phomoidride A. Finally, the methyltransferase tstE converts phomoidride A to phomoidride B via an acetalization reaction. The phosphatidylethanolamine-binding protein tstB and tstN are not essential for dimerization and their functions have still to be determined. This Talaromyces stipitatus (strain ATCC 10500 / CBS 375.48 / QM 6759 / NRRL 1006) (Penicillium stipitatum) protein is Alpha-ketoglutarate-dependent dioxygenase tstK.